A 250-amino-acid polypeptide reads, in one-letter code: Carboxymethylproline synthase (250 aa).

Malonyl-CoA is bound at residue 60–64 (AGGDF).

Belongs to the enoyl-CoA hydratase/isomerase family. Homotrimer.

The catalysed reaction is (S)-1-pyrroline-5-carboxylate + malonyl-CoA + H2O + H(+) = (2S,5S)-5-carboxymethylproline + CO2 + CoA. It participates in antibiotic biosynthesis; carbapenem biosynthesis. In terms of biological role, catalyzes the formation of (2S,5S)-carboxymethylproline (t-CMP) from malonyl-CoA and (S)-1-pyrroline-5-carboxylate, the first step in the biosynthesis of (5R)-carbapen-2-em-3-carboxylate, a beta-lactam antibiotic of the carbapenem class. Also catalyzes the independent decarboxylation of malonyl-CoA and methylmalonyl-CoA and the hydrolysis of CoA esters such as acetyl-CoA and propionyl-CoA. Catalyzes the reaction with a C2 epimeric mixture of methylmalonyl-CoA to give a 55:45 mixture of (6R)- and (6S)-epimers of 6-methyl-t-CMP, under standard incubation conditions. The sequence is that of Carboxymethylproline synthase from Pectobacterium carotovorum subsp. carotovorum (Erwinia carotovora subsp. carotovora).